The following is a 324-amino-acid chain: Dolichyl-phosphate beta-glucosyltransferase (324 aa).

Residues 1–7 (MAPLLLQ) lie on the Lumenal side of the membrane. The chain crosses the membrane as a helical; Signal-anchor for type II membrane protein span at residues 8–28 (LAVLGAALAAAALVLISIVAF). The Cytoplasmic segment spans residues 29–324 (TTATKMPALH…WRLEQTRKMN (296 aa)).

The protein belongs to the glycosyltransferase 2 family. In terms of tissue distribution, expressed in pancreas, placenta, liver, heart, brain, kidney, skeletal muscle, and lung.

The protein resides in the endoplasmic reticulum membrane. It carries out the reaction a di-trans,poly-cis-dolichyl phosphate + UDP-alpha-D-glucose = a di-trans,poly-cis-dolichyl beta-D-glucosyl phosphate + UDP. The protein operates within protein modification; protein glycosylation. Dolichyl-phosphate beta-glucosyltransferase that operates in the biosynthetic pathway of dolichol-linked oligosaccharides, the glycan precursors employed in protein asparagine (N)-glycosylation. The assembly of dolichol-linked oligosaccharides begins on the cytosolic side of the endoplasmic reticulum membrane and finishes in its lumen. The sequential addition of sugars to dolichol pyrophosphate produces dolichol-linked oligosaccharides containing fourteen sugars, including two GlcNAcs, nine mannoses and three glucoses. Once assembled, the oligosaccharide is transferred from the lipid to nascent proteins by oligosaccharyltransferases. Dolichyl-phosphate beta-glucosyltransferase produces dolichyl beta-D-glucosyl phosphate/Dol-P-Glc, the glucose donor substrate used sequentially by ALG6, ALG8 and ALG10 to add glucose residues on top of the Man(9)GlcNAc(2)-PP-Dol structure. These are the three last steps in the biosynthetic pathway of dolichol-linked oligosaccharides to produce Glc(3)Man(9)GlcNAc(2)-PP-Dol. The enzyme is most probably active on the cytoplasmic side of the endoplasmic reticulum while its product Dol-P-Glc is the substrate for ALG6, ALG8 and ALG11 in the lumen of the endoplasmic reticulum. This is Dolichyl-phosphate beta-glucosyltransferase from Homo sapiens (Human).